The following is a 175-amino-acid chain: Endoribonuclease YbeY (175 aa).

The Zn(2+) site is built by His121, His125, and His131. Positions 154–175 are disordered; that stretch reads PDPYSPAQQESQAQPENTELNP. The span at 159–175 shows a compositional bias: polar residues; the sequence is PAQQESQAQPENTELNP.

This sequence belongs to the endoribonuclease YbeY family. Requires Zn(2+) as cofactor.

It localises to the cytoplasm. In terms of biological role, single strand-specific metallo-endoribonuclease involved in late-stage 70S ribosome quality control and in maturation of the 3' terminus of the 16S rRNA. The protein is Endoribonuclease YbeY of Alcanivorax borkumensis (strain ATCC 700651 / DSM 11573 / NCIMB 13689 / SK2).